Consider the following 111-residue polypeptide: Universal stress protein B (111 aa).

The next 2 helical transmembrane spans lie at 1-21 and 90-110; these read MIST…NMAR and FLLT…MMMW.

Belongs to the universal stress protein B family.

It localises to the cell inner membrane. This is Universal stress protein B from Pectobacterium atrosepticum (strain SCRI 1043 / ATCC BAA-672) (Erwinia carotovora subsp. atroseptica).